The primary structure comprises 468 residues: Interleukin-6 receptor subunit alpha (468 aa).

The N-terminal stretch at 1–19 (MLAVGCALLAALLAAPGAA) is a signal peptide. Residues 20-365 (LAPRRCPAQE…VQDSSSVPLP (346 aa)) lie on the Extracellular side of the membrane. Cystine bridges form between C25/C193, C47/C96, C121/C132, and C165/C176. Residues 26–112 (PAQEVARGVL…AGTVHLLVDV (87 aa)) form the Ig-like C2-type domain. N-linked (GlcNAc...) asparagine glycosylation is found at N55 and N93. 2 Fibronectin type-III domains span residues 113-217 (PPEE…LQPD) and 218-316 (PPAN…TPWT). Residues N221 and N245 are each glycosylated (N-linked (GlcNAc...) asparagine). The WSXWS motif signature appears at 303-307 (WSEWS). Residues 303–328 (WSEWSPEAMGTPWTESRSPPAENEVS) are disordered. The N-linked (GlcNAc...) asparagine glycan is linked to N350. A glycan (O-linked (GlcNAc) threonine) is linked at T352. A helical membrane pass occupies residues 366 to 386 (TFLVAGGSLAFGTLLCIAIVL). Over 387-468 (RFKKTWKLRA…ISNTDYFFPR (82 aa)) the chain is Cytoplasmic. Residues 421–433 (TPVLVPLISPPVS) show a composition bias toward pro residues. The disordered stretch occupies residues 421–468 (TPVLVPLISPPVSPSSLGSDNTSSHNRPDARDPRSPYDISNTDYFFPR). Basic and acidic residues predominate over residues 446 to 455 (NRPDARDPRS). A compositionally biased stretch (polar residues) spans 458-468 (DISNTDYFFPR).

It belongs to the type I cytokine receptor family. Type 3 subfamily. In terms of assembly, component of a hexamer of two molecules each of IL6, IL6R and IL6ST; first binds to IL6 to associate with the signaling subunit IL6ST. Interacts (via N-terminal ectodomain) with SORL1; this interaction may affect IL6-binding to IL6R, hence decrease IL6 'classic-signaling'. As to quaternary structure, also interacts with SORL1; this interaction leads to soluble IL6R internalization. May form a trimeric complex with the soluble SORL1 ectodomain and circulating IL6 receptor; this interaction might stabilize circulating IL6, hence promote IL6 'trans-signaling,. A short soluble form is released from the membrane by proteolysis. The sIL6R is formed mostly by limited proteolysis of membrane-bound receptors, a process referred to as ectodomain shedding, but is also directly secreted from the cells after alternative mRNA splicing. mIL6R is cleaved by the proteases ADAM10 and ADAM17. Post-translationally, glycosylated. Glycosylation is dispensable for transport, signaling, and cell-surface turnover. Glycosylation at Asn-55 is a protease-regulatory exosite. Glycosylation is required for ADAM17-mediated proteolysis. In terms of tissue distribution, expressed in peripheral blood mononuclear cells and weakly found in urine and serum. 1%-20% of the total sIL6R in plasma is generated by alternative splicing.

It localises to the cell membrane. It is found in the secreted. Its activity is regulated as follows. Classic and trans-signaling are both inhibited by tocilizumab, a humanized monoclonal antibody that blocks interleukin IL6R signaling. In terms of biological role, part of the receptor for interleukin 6. Binds to IL6 with low affinity, but does not transduce a signal. Signal activation necessitate an association with IL6ST. Activation leads to the regulation of the immune response, acute-phase reactions and hematopoiesis. The interaction with membrane-bound IL6R and IL6ST stimulates 'classic signaling', the restricted expression of the IL6R limits classic IL6 signaling to only a few tissues such as the liver and some cells of the immune system. Whereas the binding of IL6 and soluble IL6R to IL6ST stimulates 'trans-signaling'. Alternatively, 'cluster signaling' occurs when membrane-bound IL6:IL6R complexes on transmitter cells activate IL6ST receptors on neighboring receiver cells. Signaling via the membrane-bound IL6R is mostly regenerative and anti-inflammatory. Drives naive CD4(+) T cells to the Th17 lineage, through 'cluster signaling' by dendritic cells. Its function is as follows. Soluble form of IL6 receptor (sIL6R) that acts as an agonist of IL6 activity. The IL6:sIL6R complex (hyper-IL6) binds to IL6ST/gp130 on cell surfaces and induces signaling also on cells that do not express membrane-bound IL6R in a process called IL6 'trans-signaling'. sIL6R is causative for the pro-inflammatory properties of IL6 and an important player in the development of chronic inflammatory diseases. In complex with IL6, is required for induction of VEGF production. Plays a protective role during liver injury, being required for maintenance of tissue regeneration. 'Trans-signaling' in central nervous system regulates energy and glucose homeostasis. In Homo sapiens (Human), this protein is Interleukin-6 receptor subunit alpha.